The following is a 237-amino-acid chain: RING-H2 finger protein ATL57 (237 aa).

Residues 51-71 (ALTIFILLVALFFMGFFSVYF) traverse the membrane as a helical segment. The RING-type; atypical zinc finger occupies 140 to 182 (CVICLSDFEEGETVKVIPHCGHVFHVDCVDTWLSSYVTCPLCR).

This sequence belongs to the RING-type zinc finger family. ATL subfamily.

It localises to the membrane. It catalyses the reaction S-ubiquitinyl-[E2 ubiquitin-conjugating enzyme]-L-cysteine + [acceptor protein]-L-lysine = [E2 ubiquitin-conjugating enzyme]-L-cysteine + N(6)-ubiquitinyl-[acceptor protein]-L-lysine.. The protein operates within protein modification; protein ubiquitination. The polypeptide is RING-H2 finger protein ATL57 (ATL57) (Arabidopsis thaliana (Mouse-ear cress)).